The chain runs to 85 residues: MAHKKAGGSTKNGRDSQSKRLGVKRYGGESVSAGSIIVRQRGTHFHAGENVGVGKDYTLFAKSDGRVVFERKGPAQRRRVRIEAA.

The interval 1–27 (MAHKKAGGSTKNGRDSQSKRLGVKRYG) is disordered.

This sequence belongs to the bacterial ribosomal protein bL27 family.

The sequence is that of Large ribosomal subunit protein bL27 from Halorhodospira halophila (strain DSM 244 / SL1) (Ectothiorhodospira halophila (strain DSM 244 / SL1)).